Here is a 139-residue protein sequence, read N- to C-terminus: Holo-[acyl-carrier-protein] synthase (139 aa).

Mg(2+) is bound by residues aspartate 8 and glutamate 61.

Belongs to the P-Pant transferase superfamily. AcpS family. It depends on Mg(2+) as a cofactor.

Its subcellular location is the cytoplasm. The enzyme catalyses apo-[ACP] + CoA = holo-[ACP] + adenosine 3',5'-bisphosphate + H(+). Transfers the 4'-phosphopantetheine moiety from coenzyme A to a Ser of acyl-carrier-protein. This chain is Holo-[acyl-carrier-protein] synthase, found in Nitrobacter winogradskyi (strain ATCC 25391 / DSM 10237 / CIP 104748 / NCIMB 11846 / Nb-255).